The sequence spans 109 residues: N-cym protein (109 aa).

In terms of assembly, interacts with MYCN and GSK3B. Expressed in the neuronal cells of the cerebrum and cerebellum, spermatocytes of the testis, pancreatic cells and also the heart. Expressed in both primary and metastatic neuroblastomas and in thyroid tumors (at protein level). Expression is associated with poor prognosis in neuroblastoma. Expressed in the fetal brain, lung, liver and kidney at varying low levels.

It is found in the cytoplasm. It localises to the nucleus. Functionally, regulates stability of MYCN in neuroblastoma cells by inhibiting GSK3B-mediated MYCN phosphorylation. Inhibits GSK3B activity by promoting its phosphorylation at 'Ser-9'. This chain is N-cym protein (MYCNOS), found in Homo sapiens (Human).